The primary structure comprises 350 residues: S-adenosylmethionine:tRNA ribosyltransferase-isomerase (350 aa).

This sequence belongs to the QueA family. Monomer.

The protein resides in the cytoplasm. The catalysed reaction is 7-aminomethyl-7-carbaguanosine(34) in tRNA + S-adenosyl-L-methionine = epoxyqueuosine(34) in tRNA + adenine + L-methionine + 2 H(+). It participates in tRNA modification; tRNA-queuosine biosynthesis. Its function is as follows. Transfers and isomerizes the ribose moiety from AdoMet to the 7-aminomethyl group of 7-deazaguanine (preQ1-tRNA) to give epoxyqueuosine (oQ-tRNA). In Aliivibrio salmonicida (strain LFI1238) (Vibrio salmonicida (strain LFI1238)), this protein is S-adenosylmethionine:tRNA ribosyltransferase-isomerase.